The primary structure comprises 432 residues: Adenylosuccinate synthetase (432 aa).

Residues 13–19 and 41–43 contribute to the GTP site; these read GDEGKGK and GHT. Catalysis depends on Asp14, which acts as the Proton acceptor. Mg(2+)-binding residues include Asp14 and Gly41. IMP is bound by residues 14 to 17, 39 to 42, Thr130, Arg144, Gln225, Thr240, and Arg304; these read DEGK and NAGH. The active-site Proton donor is His42. A substrate-binding site is contributed by 300-306; the sequence is ATTGRRR. GTP-binding positions include Arg306, 332-334, and 415-417; these read KLD and STG.

It belongs to the adenylosuccinate synthetase family. In terms of assembly, homodimer. Mg(2+) is required as a cofactor.

The protein resides in the cytoplasm. It carries out the reaction IMP + L-aspartate + GTP = N(6)-(1,2-dicarboxyethyl)-AMP + GDP + phosphate + 2 H(+). It functions in the pathway purine metabolism; AMP biosynthesis via de novo pathway; AMP from IMP: step 1/2. Functionally, plays an important role in the de novo pathway of purine nucleotide biosynthesis. Catalyzes the first committed step in the biosynthesis of AMP from IMP. The sequence is that of Adenylosuccinate synthetase from Shigella flexneri serotype 5b (strain 8401).